Consider the following 760-residue polypeptide: Endoplasmin homolog (760 aa).

Positions 1 to 23 are cleaved as a signal peptide; sequence MRFLLVGFVALLAVSAFIPNVYA. ATP contacts are provided by Asn-95, Asp-137, Asn-150, and Phe-187. N-linked (GlcNAc...) asparagine glycosylation occurs at Asn-95. Asn-423 carries an N-linked (GlcNAc...) asparagine glycan. Residues 727-760 are disordered; the sequence is SQDAQVETEQHIEEAEPEPEAAEETTIEEEHSEL. The span at 741–760 shows a compositional bias: acidic residues; it reads AEPEPEAAEETTIEEEHSEL. The Prevents secretion from ER motif lies at 757–760; it reads HSEL.

This sequence belongs to the heat shock protein 90 family.

The protein resides in the endoplasmic reticulum lumen. Molecular chaperone that functions in the processing and transport of secreted proteins. The protein is Endoplasmin homolog of Caenorhabditis elegans.